We begin with the raw amino-acid sequence, 320 residues long: Polyprenyl transferase pyr6 (320 aa).

A run of 6 helical transmembrane segments spans residues 22–42, 60–80, 101–121, 127–147, 155–175, and 186–206; these read KYNC…AAAS, GLAF…NDWI, LATR…VWLM, GQNL…YPFG, LGIY…LPAW, and PDLL…TIYF. N-linked (GlcNAc...) asparagine glycosylation is present at Asn224. A helical transmembrane segment spans residues 233-253; the sequence is YVHGLLLLQAVAVVMVIPWIL. Asn256 carries an N-linked (GlcNAc...) asparagine glycan. The next 2 helical transmembrane spans lie at 260 to 280 and 296 to 316; these read WLWF…LYLF and FALG…VSGS.

Belongs to the UbiA prenyltransferase family. Mg(2+) is required as a cofactor.

The protein resides in the membrane. The enzyme catalyses 4-hydroxy-6-(pyridin-3-yl)-2H-pyran-2-one + (2E,6E)-farnesyl diphosphate = 4-hydroxy-3-[(2E,6E)-farnesyl]-6-(pyridin-3-yl)-2H-pyran-2-one + diphosphate. Its pathway is secondary metabolite biosynthesis; terpenoid biosynthesis. In terms of biological role, polyprenyl transferase; part of the gene cluster that mediates the biosynthesis of pyripyropene A, a specific human acyl-coenzyme A:cholesterol acyltransferase 2 inhibitor. The first step of the pathway is the synthesis of nicotinyl-CoA from nicotinic acid by the nicotinic acid-CoA ligase pyr1. Nicotinyl-CoA is then a substrate of polyketide synthase pyr2 to produce 4-hydroxy-6-(3-pyridinyl)-2H-pyran-2-one (HPPO) which is further prenylated by the polyprenyl transferase pyr6 to yield farnesyl-HPPO. The next steps consist of an epoxidation of farnesyl-HPPO to epoxyfarnesyl-HPPO by FAD-dependent monooxygenase pyr5 and a cyclization of the terpenoid portion by the terpene cyclase pyr4 to yield deacetyl-pyripyropene E. The 2 cytochrome P450 monooxygenases pyr3 and pyr9, and the 2 acetyltransferases pyr7 and pyr8 are involved in the conversion of deacetyl-pyripyropene E into pyripyropene A through several cycles of oxidation and acetylation steps. Pyr7 acetylates deacetyl-pyripyropene E to pyripyropene E which is oxidized to 11-deacetyl-pyripyropene O by pyr3, which is in turn acetylated into pyripyropene O by pyr8. Pyripyropene O is then oxidized to deacetyl-pyripyropene A by pyr9. Deacetyl-pyripyropene A is finally acetylated to pyripyropene A by pyr8. This is Polyprenyl transferase pyr6 from Aspergillus fumigatus (strain ATCC MYA-4609 / CBS 101355 / FGSC A1100 / Af293) (Neosartorya fumigata).